Here is a 259-residue protein sequence, read N- to C-terminus: MTRREDGRLDDELRPLVITRGFTEHPAGSVLIEFGHTKVMCTASVTEGVPRWRKGSGLGWLTAEYAMLPSATHTRSDRESVKGRLSGRTQEISRLIGRSLRACIDLAALGENTIAVDCDVLQADGGTRTAAITGAFVALADAVTYLSAAGKLSDPRPLSCAIAAVSVGVVDGRIRVDLPYEEDARAEVDMNVVATDTGTLVEVQGTGEGATFPRSTLDKLLDAALAACDKLFAAQREALKLPYPGVLPEGPPPPKAFGS.

Phosphate contacts are provided by residues Arg-88 and 126 to 128 (GTR).

It belongs to the RNase PH family. As to quaternary structure, homohexameric ring arranged as a trimer of dimers.

It carries out the reaction tRNA(n+1) + phosphate = tRNA(n) + a ribonucleoside 5'-diphosphate. Its function is as follows. Phosphorolytic 3'-5' exoribonuclease that plays an important role in tRNA 3'-end maturation. Removes nucleotide residues following the 3'-CCA terminus of tRNAs; can also add nucleotides to the ends of RNA molecules by using nucleoside diphosphates as substrates, but this may not be physiologically important. Probably plays a role in initiation of 16S rRNA degradation (leading to ribosome degradation) during starvation. This is Ribonuclease PH from Mycolicibacterium paratuberculosis (strain ATCC BAA-968 / K-10) (Mycobacterium paratuberculosis).